The chain runs to 706 residues: DNA ligase (706 aa).

Residues 40 to 44 (DLQYD), 89 to 90 (SI), and E120 contribute to the NAD(+) site. K122 functions as the N6-AMP-lysine intermediate in the catalytic mechanism. The NAD(+) site is built by R143, E190, K306, and K330. Positions 424, 427, 442, and 447 each coordinate Zn(2+). In terms of domain architecture, BRCT spans 625 to 706 (EANLPLAGKN…FRLRYETEAT (82 aa)).

It belongs to the NAD-dependent DNA ligase family. LigA subfamily. Requires Mg(2+) as cofactor. It depends on Mn(2+) as a cofactor.

The enzyme catalyses NAD(+) + (deoxyribonucleotide)n-3'-hydroxyl + 5'-phospho-(deoxyribonucleotide)m = (deoxyribonucleotide)n+m + AMP + beta-nicotinamide D-nucleotide.. Functionally, DNA ligase that catalyzes the formation of phosphodiester linkages between 5'-phosphoryl and 3'-hydroxyl groups in double-stranded DNA using NAD as a coenzyme and as the energy source for the reaction. It is essential for DNA replication and repair of damaged DNA. The sequence is that of DNA ligase from Rhodopirellula baltica (strain DSM 10527 / NCIMB 13988 / SH1).